The chain runs to 429 residues: Light-independent protochlorophyllide reductase subunit N (429 aa).

3 residues coordinate [4Fe-4S] cluster: C32, C57, and C118.

Belongs to the BchN/ChlN family. In terms of assembly, protochlorophyllide reductase is composed of three subunits; BchL, BchN and BchB. Forms a heterotetramer of two BchB and two BchN subunits. [4Fe-4S] cluster serves as cofactor.

The catalysed reaction is chlorophyllide a + oxidized 2[4Fe-4S]-[ferredoxin] + 2 ADP + 2 phosphate = protochlorophyllide a + reduced 2[4Fe-4S]-[ferredoxin] + 2 ATP + 2 H2O. Its pathway is porphyrin-containing compound metabolism; bacteriochlorophyll biosynthesis (light-independent). Functionally, component of the dark-operative protochlorophyllide reductase (DPOR) that uses Mg-ATP and reduced ferredoxin to reduce ring D of protochlorophyllide (Pchlide) to form chlorophyllide a (Chlide). This reaction is light-independent. The NB-protein (BchN-BchB) is the catalytic component of the complex. The protein is Light-independent protochlorophyllide reductase subunit N of Rhodopseudomonas palustris (strain ATCC BAA-98 / CGA009).